The chain runs to 179 residues: Small heat shock protein hspK (179 aa).

A sHSP domain is found at 32–178; the sequence is HRINIWRPTV…DRLKIPIQSK (147 aa). The segment at 80-122 is disordered; that stretch reads KKSKGGLNNLPSSSSSINSDSTTNTNTNTTTTTTTAPPPPSDA. The span at 87-114 shows a compositional bias: low complexity; the sequence is NNLPSSSSSINSDSTTNTNTNTTTTTTT.

The protein belongs to the small heat shock protein (HSP20) family.

This is Small heat shock protein hspK (hspK) from Dictyostelium discoideum (Social amoeba).